A 192-amino-acid polypeptide reads, in one-letter code: NADH-quinone oxidoreductase subunit C (192 aa).

The tract at residues 170–192 (LGGIPVEYKGATVPPPDERRQYA) is disordered.

It belongs to the complex I 30 kDa subunit family. In terms of assembly, NDH-1 is composed of 14 different subunits. Subunits NuoB, C, D, E, F, and G constitute the peripheral sector of the complex.

The protein localises to the cell membrane. The enzyme catalyses a quinone + NADH + 5 H(+)(in) = a quinol + NAD(+) + 4 H(+)(out). Its function is as follows. NDH-1 shuttles electrons from NADH, via FMN and iron-sulfur (Fe-S) centers, to quinones in the respiratory chain. The immediate electron acceptor for the enzyme in this species is believed to be a menaquinone. Couples the redox reaction to proton translocation (for every two electrons transferred, four hydrogen ions are translocated across the cytoplasmic membrane), and thus conserves the redox energy in a proton gradient. The polypeptide is NADH-quinone oxidoreductase subunit C (Acidothermus cellulolyticus (strain ATCC 43068 / DSM 8971 / 11B)).